A 748-amino-acid chain; its full sequence is DNA helicase/primase complex-associated protein (748 aa).

It belongs to the herpesviridae HEPA family. In terms of assembly, associates with the primase and the helicase to form the helicase-primase complex. Interacts with the origin-binding protein. Interacts with the polymerase catalytic subunit.

Its subcellular location is the host nucleus. Component of the helicase/primase complex. Unwinds the DNA at the replication forks and generates single-stranded DNA for both leading and lagging strand synthesis. The primase synthesizes short RNA primers on the lagging strand that the polymerase presumably elongates using dNTPs. The primase-associated factor has no known catalytic activity in the complex and may serve to facilitate the formation of the replisome by directly interacting with the origin-binding protein and the polymerase. This chain is DNA helicase/primase complex-associated protein (UL8), found in Bos taurus (Bovine).